We begin with the raw amino-acid sequence, 398 residues long: Glucose-1-phosphate adenylyltransferase (398 aa).

Alpha-D-glucose 1-phosphate contacts are provided by residues Y100, G165, 180–181 (EK), and S191.

This sequence belongs to the bacterial/plant glucose-1-phosphate adenylyltransferase family. In terms of assembly, homotetramer.

The catalysed reaction is alpha-D-glucose 1-phosphate + ATP + H(+) = ADP-alpha-D-glucose + diphosphate. The protein operates within glycan biosynthesis; glycogen biosynthesis. In terms of biological role, involved in the biosynthesis of ADP-glucose, a building block required for the elongation reactions to produce glycogen. Catalyzes the reaction between ATP and alpha-D-glucose 1-phosphate (G1P) to produce pyrophosphate and ADP-Glc. In Desulfitobacterium hafniense (strain DSM 10664 / DCB-2), this protein is Glucose-1-phosphate adenylyltransferase.